The primary structure comprises 127 residues: Protein P6 (127 aa).

It localises to the virion membrane. The chain is Protein P6 (VI) from Pseudoalteromonas espejiana (Bacteriophage PM2).